The primary structure comprises 406 residues: Corticosteroid-binding globulin (406 aa).

Positions Met-1–Ala-22 are cleaved as a signal peptide. Residues Asn-31 and Asn-96 are each glycosylated (N-linked (GlcNAc...) asparagine). Residue Gln-255 coordinates cortisol. Residue Asn-261 is glycosylated (N-linked (GlcNAc...) asparagine). Asp-287 provides a ligand contact to cortisol. Asn-331 and Asn-360 each carry an N-linked (GlcNAc...) asparagine glycan. Trp-394 lines the cortisol pocket.

It belongs to the serpin family. In terms of tissue distribution, expressed by the liver; secreted in plasma.

The protein resides in the secreted. Major transport protein for glucocorticoids and progestins in the blood of almost all vertebrate species. This is Corticosteroid-binding globulin (SERPINA6) from Saimiri sciureus (Common squirrel monkey).